Consider the following 910-residue polypeptide: Anoctamin-6 (910 aa).

Residues 1–300 lie on the Cytoplasmic side of the membrane; sequence MKKMSRNVLL…YGEKIGIYFA (300 aa). The helical transmembrane segment at 301–321 threads the bilayer; it reads WLGYYTQMLLLAAVVGVACFL. The Extracellular segment spans residues 322-375; that stretch reads YGYLNQDNCTWSKEVCHPDIGGKIIMCPQCDRLCPFWKLNITCESSKKLCIFDS. The N-linked (GlcNAc...) asparagine glycan is linked to asparagine 329. Disulfide bonds link cysteine 330–cysteine 371, cysteine 337–cysteine 364, cysteine 348–cysteine 806, cysteine 351–cysteine 355, and cysteine 595–cysteine 600. A glycan (N-linked (GlcNAc...) asparagine) is linked at asparagine 361. The helical transmembrane segment at 376 to 396 threads the bilayer; that stretch reads FGTLVFAVFMGVWVTLFLEFW. Topologically, residues 397-455 are cytoplasmic; the sequence is KRRQAELEYEWDTVELQQEEQARPEYEARCTHVVINEITQEEERIPFTAWGKCIRITLC. The helical transmembrane segment at 456 to 476 threads the bilayer; that stretch reads ASAVFFWILLIIASVIGIIVY. At 477-509 the chain is on the extracellular side; it reads RLSVFIVFSAKLPKNINGTDPIQKYLTPQTATS. Asparagine 493 is a glycosylation site (N-linked (GlcNAc...) asparagine). Residues 510-530 traverse the membrane as a helical segment; that stretch reads ITASIISFIIIMILNTIYEKV. At 531-551 the chain is on the cytoplasmic side; that stretch reads AIMITNFELPRTQTDYENSLT. Residues 552 to 572 traverse the membrane as a helical segment; the sequence is MKMFLFQFVNYYSSCFYIAFF. Residues 573-601 are Extracellular-facing; sequence KGKFVGYPGDPVYWLGKYRNEECDPGGCL. The helical transmembrane segment at 602–621 threads the bilayer; sequence LELTTQLTIIMGGKAIWNNI. The Cytoplasmic portion of the chain corresponds to 622–663; it reads QEVLLPWIMNLIGRFHRVSGSEKITPRWEQDYHLQPMGKLGL. Positions 623, 666, and 669 each coordinate Ca(2+). 2 helical membrane passes run 664-684 and 685-705; these read FYEYLEMIIQFGFVTLFVASF and PLAPLLALVNNILEIRVDAWK. Over 706–722 the chain is Cytoplasmic; the sequence is LTTQFRRLVPEKAQDIG. The helical transmembrane segment at 723 to 743 threads the bilayer; it reads AWQPIMQGIAILAVVTNAMII. Over 744–836 the chain is Extracellular; it reads AFTSDMIPRL…YWHVIAAKLA (93 aa). Residues asparagine 777, asparagine 790, and asparagine 802 are each glycosylated (N-linked (GlcNAc...) asparagine). Residues 837 to 857 traverse the membrane as a helical segment; that stretch reads FIIVMEHVIYSVKFFISYAIP. Topologically, residues 858 to 910 are cytoplasmic; the sequence is DVSKRTKSKIQREKYLTQKLLHENHLKDMTKNMGVIAERMIEAVDNNLRPKSE.

Belongs to the anoctamin family. In terms of assembly, homodimer. Expressed in embryonic stem cell, fetal liver, retina, chronic myologenous leukemia and intestinal cancer.

It is found in the cell membrane. The enzyme catalyses a 1,2-diacyl-sn-glycero-3-phospho-L-serine(in) = a 1,2-diacyl-sn-glycero-3-phospho-L-serine(out). The catalysed reaction is a beta-D-galactosyl-(1&lt;-&gt;1')-N-acylsphing-4-enine(out) = a beta-D-galactosyl-(1&lt;-&gt;1')-N-acylsphing-4-enine(in). It catalyses the reaction a 1,2-diacyl-sn-glycero-3-phosphocholine(in) = a 1,2-diacyl-sn-glycero-3-phosphocholine(out). Exhibits synergistic gating by Ca(2+) and voltage. Inhibited by some non-specific cation channel blockers such as: ruthenium red, 2-aminoethyl diphenylborinate (2APB), gadolinium and cadmium ions. With respect to regulation, (Microbial infection) Activated by SARS coronavirus-2/SARS-CoV-2 spike protein. Functionally, small-conductance calcium-activated nonselective cation (SCAN) channel which acts as a regulator of phospholipid scrambling in platelets and osteoblasts. Phospholipid scrambling results in surface exposure of phosphatidylserine which in platelets is essential to trigger the clotting system whereas in osteoblasts is essential for the deposition of hydroxyapatite during bone mineralization. Has calcium-dependent phospholipid scramblase activity; scrambles phosphatidylserine, phosphatidylcholine and galactosylceramide. Can generate outwardly rectifying chloride channel currents in airway epithelial cells and Jurkat T lymphocytes. (Microbial infection) Upon SARS coronavirus-2/SARS-CoV-2 infection, is activated by spike protein which increases the amplitude of spontaneous Ca(2+) signals and is required for spike-mediated syncytia. The protein is Anoctamin-6 of Homo sapiens (Human).